A 729-amino-acid polypeptide reads, in one-letter code: Capsid protein VP1 (729 aa).

Disordered stretches follow at residues 1-38, 94-129, and 163-186; these read MAPPAKRARGLTLPGYKYLGPGNSLDQGEPTNPSDAAA, KLSETDSPTTSQQPEVRRSPRKHPGSKPPGKRPAPR, and AGTELSATGNESGGGGGGGGGRGA. Positions 4-12 match the Nuclear localization signal motif; the sequence is PAKRARGLT. The phospholipase A2-like stretch occupies residues 18-63; sequence YLGPGNSLDQGEPTNPSDAAAKEHDEAYDKYIKSGKNPYFYFSAAD. Composition is skewed to polar residues over residues 24–34 and 98–107; these read SLDQGEPTNPS and TDSPTTSQQP. Residues 112-128 are compositionally biased toward basic residues; sequence SPRKHPGSKPPGKRPAP. The span at 173 to 186 shows a compositional bias: gly residues; it reads ESGGGGGGGGGRGA. A Mg(2+)-binding site is contributed by Asn-330. The segment at 437–465 is disordered; sequence GLPPKLLTEPTTEGDQHPGTLPAANTRKG.

It belongs to the parvoviridae capsid protein family.

The protein resides in the virion. Its subcellular location is the host nucleus. Capsid protein self-assembles to form an icosahedral capsid with a T=1 symmetry, about 22 nm in diameter, and consisting of 60 copies of two size variants of the capsid proteins, VP1 and VP2, which differ by the presence of an N-terminal extension in the minor protein VP1. The capsid encapsulates the genomic ssDNA. Capsid proteins are responsible for the attachment to host cell receptors. This attachment induces virion internalization predominantly through clathrin-dependent endocytosis. Binding to the host receptors also induces capsid rearrangements leading to surface exposure of VP1 N-terminus, specifically its phospholipase A2-like region and putative nuclear localization signal(s). VP1 N-terminus might serve as a lipolytic enzyme to breach the endosomal membrane during entry into host cell and might contribute to virus transport to the nucleus. The polypeptide is Capsid protein VP1 (Sus scrofa (Pig)).